The chain runs to 359 residues: Cinnamyl alcohol dehydrogenase 8 (359 aa).

Cys46 provides a ligand contact to Zn(2+). Residue Ser48 coordinates NADP(+). His68, Glu69, Cys99, Cys102, Cys105, Cys113, and Cys162 together coordinate Zn(2+). NADP(+)-binding positions include Thr166, 187–192 (GLGGLG), 210–215 (STSEKK), Thr250, Gly274, and 297–299 (SMI).

Belongs to the zinc-containing alcohol dehydrogenase family. In terms of assembly, homodimer. The cofactor is Zn(2+). In terms of tissue distribution, expressed in the differentiation and elongation zones of primary and lateral roots. Expressed in the hypocotyl, cotyledon veins, vasculature of the first rosette leaves, hydathodes and trichomes. In stems, expressed in the vascular cambium and developing xylem tissues. Expressed in the style, anthers, stamen filaments, stigmatic regions in flowers, and abscission and style regions of siliques.

It carries out the reaction (E)-cinnamyl alcohol + NADP(+) = (E)-cinnamaldehyde + NADPH + H(+). It participates in aromatic compound metabolism; phenylpropanoid biosynthesis. In terms of biological role, involved in lignin biosynthesis. Catalyzes the final step specific for the production of lignin monomers. Catalyzes the NADPH-dependent reduction of coniferaldehyde, 5-hydroxyconiferaldehyde, sinapaldehyde, 4-coumaraldehyde and caffeyl aldehyde to their respective alcohols. This is Cinnamyl alcohol dehydrogenase 8 (CAD8) from Arabidopsis thaliana (Mouse-ear cress).